The primary structure comprises 241 residues: Large ribosomal subunit protein uL2 (241 aa).

The segment covering 1-12 has biased composition (basic residues); it reads MGKRLISQRRGR. Disordered stretches follow at residues 1 to 21 and 200 to 241; these read MGKR…RSAS and AVDH…GKRR.

Belongs to the universal ribosomal protein uL2 family. As to quaternary structure, part of the 50S ribosomal subunit. Forms a bridge to the 30S subunit in the 70S ribosome.

Functionally, one of the primary rRNA binding proteins. Required for association of the 30S and 50S subunits to form the 70S ribosome, for tRNA binding and peptide bond formation. It has been suggested to have peptidyltransferase activity; this is somewhat controversial. Makes several contacts with the 16S rRNA in the 70S ribosome. The sequence is that of Large ribosomal subunit protein uL2 from Methanothermobacter thermautotrophicus (strain ATCC 29096 / DSM 1053 / JCM 10044 / NBRC 100330 / Delta H) (Methanobacterium thermoautotrophicum).